A 74-amino-acid polypeptide reads, in one-letter code: Alpha-conotoxin GeXIVA (74 aa).

The signal sequence occupies residues 1–22 (MKLTCVLIITVLFLTACQLTTA). A propeptide spanning residues 23-46 (VTYSRGEHKHRALMSTGTNYRLPK) is cleaved from the precursor. Residues 56 to 64 (RSPYDRRRR) are interacts with alpha-9-alpha-10 (CHRNA9-CHRNA10) nAChR.

This sequence belongs to the conotoxin O1 superfamily. In terms of processing, the native disulfide bond pairing has not been studied. Three isomers may exist: the bead isomer (I-II; III-IV), the globular isomer (I-III; II-IV), the ribbon isomer (I-IV; II-III). They have all been synthesized and their activity tested. All of them show similar potency on alpha-9-alpha-10 (CHRNA9-CHRNA10) nAChR, showing that disulfide bonds does not significantly affect their activity. In addition, removal of disulfide bonds does not affect the activity on alpha-9-alpha-10 (CHRNA9-CHRNA10) nAChR either. Expressed by the venom duct.

The protein resides in the secreted. Its function is as follows. Alpha-conotoxins act on postsynaptic membranes, they bind to the nicotinic acetylcholine receptors (nAChR) and thus inhibit them. This toxin is very potent on alpha-9-alpha-10/CHRNA9-CHRNA10 nAChR (IC(50)=4.61-12 nM for the bead isomer (I-II; III-IV), IC(50)=7-16 nM for the ribbon isomer (I-IV; II-III) and IC(50)=22.7 nM for the globular isomer (I-III; II-IV)). The bead isomer also shows a weak inhibition on other nAChRs (alpha-1-beta-1-delta-epsilon/CHRNA1-CHRNB1-CHRND-CHRNE, alpha-7/CHRNA7, alpha-6/alpha-3-beta-2-beta-3 (CHRNA6/CHRNA3-CHRNB2-CHRNB3), alpha-3-beta-2/CHRNA3-CHRNB2, alpha-2-beta-2/CHRNA2-CHRNB2, alpha-6/alpha-3-beta-4 (CHRNA6/CHRNA3-CHRNB4), alpha-4-beta-2/CHRNA4-CHRNB2, alpha-4-beta-4/CHRNA4-CHRNB4, alpha-2-beta-4/CHRNA2-CHRNB4, alpha-3-beta-4/CHRNA3-CHRNB4). The toxin blockade is voltage-dependent, and its binding site does not overlap with the binding site of the competitive antagonist alpha-conotoxin RgIA. The toxin inhibits Sf9 cell growth. Both the bead and ribbon isomers relieve pain effects in the rat chronic constriction injury (CCI) model of neuropathic pain, and in the acute pain model of tail flick test, but have no effect on motor performance. The polypeptide is Alpha-conotoxin GeXIVA (Conus generalis (General cone)).